Here is a 941-residue protein sequence, read N- to C-terminus: Isoleucine--tRNA ligase (941 aa).

The 'HIGH' region signature appears at 59 to 69 (PYANGNIHIGH). Residue E562 participates in L-isoleucyl-5'-AMP binding. The short motif at 603–607 (KMSKS) is the 'KMSKS' region element. ATP is bound at residue K606. Positions 904, 907, 924, and 927 each coordinate Zn(2+).

This sequence belongs to the class-I aminoacyl-tRNA synthetase family. IleS type 1 subfamily. Monomer. Requires Zn(2+) as cofactor.

The protein localises to the cytoplasm. The enzyme catalyses tRNA(Ile) + L-isoleucine + ATP = L-isoleucyl-tRNA(Ile) + AMP + diphosphate. Catalyzes the attachment of isoleucine to tRNA(Ile). As IleRS can inadvertently accommodate and process structurally similar amino acids such as valine, to avoid such errors it has two additional distinct tRNA(Ile)-dependent editing activities. One activity is designated as 'pretransfer' editing and involves the hydrolysis of activated Val-AMP. The other activity is designated 'posttransfer' editing and involves deacylation of mischarged Val-tRNA(Ile). The protein is Isoleucine--tRNA ligase of Haemophilus influenzae (strain ATCC 51907 / DSM 11121 / KW20 / Rd).